The chain runs to 483 residues: MESSLRIVAITNCPAGIAHTYMVAEALEQKARSLGHTIKVETQGSSGVENRLSSEEIAAADYVILATGRGLSGDDRARFAGKKVYEIAISQALKNIDQIFSELPTNSQLFAADSGVKLGKQEVQSGSVMSHLMAGVSAALPFVIGGGILVALANMLVQFGLPYTDMSKGAPSFTWVVESIGYLGFTFMIPIMGAYIASSIADKPAFAPAFLVCYLANDKALLGTQSGAGFLGAVVLGLAIGYFVFWFRKVRLGKALQPLLGSMLIPFVTLLVFGVLTYYVIGPVMSDLMGGLLHFLNTIPPSMKFAAAFLVGAMLAFDMGGPINKTAWFFCFSLLEKHIYDWYAIVGVVALMPPVAAGLATFIAPKLFTRQEKEAASSAIVVGATVATEPAIPYALAAPLPMITANTLAGGITGVLVIAFGIKRLAPGLGIFDPLIGLMSPVGSFYLVLAIGLALNISFIIVLKGLWLRRKAKAAQQELVHEH.

Residues 1 to 105 enclose the PTS EIIB type-2 domain; it reads MESSLRIVAI…IDQIFSELPT (105 aa). The active-site Phosphocysteine intermediate; for EIIB activity is the Cys-13. At Cys-13 the chain carries Phosphocysteine; by EIIA. In terms of domain architecture, PTS EIIC type-2 spans 128 to 475; sequence VMSHLMAGVS…LWLRRKAKAA (348 aa). A run of 10 helical transmembrane segments spans residues 132–152, 180–200, 204–224, 227–247, 264–284, 303–323, 344–364, 380–400, 402–422, and 442–462; these read LMAGVSAALPFVIGGGILVAL, IGYLGFTFMIPIMGAYIASSI, PAFAPAFLVCYLANDKALLGT, GAGFLGAVVLGLAIGYFVFWF, LIPFVTLLVFGVLTYYVIGPV, MKFAAAFLVGAMLAFDMGGPI, AIVGVVALMPPVAAGLATFIA, IVVGATVATEPAIPYALAAPL, MITANTLAGGITGVLVIAFGI, and VGSFYLVLAIGLALNISFIIV.

The protein localises to the cell inner membrane. It carries out the reaction D-fructose(out) + N(pros)-phospho-L-histidyl-[protein] = D-fructose 1-phosphate(in) + L-histidyl-[protein]. The phosphoenolpyruvate-dependent sugar phosphotransferase system (sugar PTS), a major carbohydrate active transport system, catalyzes the phosphorylation of incoming sugar substrates concomitantly with their translocation across the cell membrane. The enzyme II FrvAB PTS system is involved in fructose transport. The chain is Fructose-like PTS system EIIBC component from Escherichia coli (strain K12).